The sequence spans 194 residues: Rho-related protein racC (194 aa).

GTP is bound by residues Ala17, Gly19, Lys20, Thr21, Cys22, Glu34, Tyr36, Thr39, Gly64, Lys120, Asp122, Ala163, and Lys164. Thr21 contributes to the Mg(2+) binding site. 2 consecutive short sequence motifs (switch) follow at residues 30–41 (RKFPEDYIPTVF) and 61–79 (DTAG…YSSA). Thr39 contributes to the Mg(2+) binding site. Cys191 carries the cysteine methyl ester modification. Residue Cys191 is the site of S-geranylgeranyl cysteine attachment. Residues 192–194 (ALL) constitute a propeptide, removed in mature form.

The protein belongs to the small GTPase superfamily. Rho family. As to quaternary structure, interacts (GTP-bound form) with PAK4 (via CRIB domain). Interacts (GTP-bound form) with PAK5 (via CRIB domain). Mg(2+) is required as a cofactor.

It is found in the cell membrane. Its subcellular location is the cytoplasm. The protein localises to the cytoskeleton. The catalysed reaction is GTP + H2O = GDP + phosphate + H(+). Its activity is regulated as follows. Regulated by guanine nucleotide exchange factors (GEFs) which promote the exchange of bound GDP for free GTP, GTPase activating proteins (GAPs) which increase the GTP hydrolysis activity, and GDP dissociation inhibitors which inhibit the dissociation of the nucleotide from the GTPase. In terms of biological role, small GTPase which cycles between active GTP-bound and inactive GDP-bound states. The protein is Rho-related protein racC of Entamoeba histolytica (strain ATCC 30459 / HM-1:IMSS / ABRM).